A 266-amino-acid chain; its full sequence is Gasdermin bGSDM (266 aa).

Beta stranded transmembrane passes span 67 to 83 (LQQN…GVDI), 95 to 113 (KLRG…ISYQ), 162 to 179 (SFSV…DLEA), and 187 to 203 (ADVN…LMEY).

Belongs to the bacterial gasdermin family. In terms of assembly, monomer. Forms large, homooligomeric ring-shaped pores when inserted in membranes.

The protein resides in the cytoplasm. It localises to the cell inner membrane. The full-length protein before cleavage is inactive: intramolecular interactions between the N-terminal domain and the C-terminal region mediate autoinhibition. The pyroptosis-like-inducing activity is carried by the released N-terminal domain (Gasdermin bGSDM, N-terminus). In terms of biological role, precursor of a pore-forming protein involved in defense against bacteriophages. Expression of bGSDM and the neighboring protease gene (Gilli_2517) is not toxic in E.coli. Cleavage of this precursor by its dedicated protease releases the active moiety (gasdermin bGSDM, N-terminus) which inserts into membranes, forming pores and triggering cell death. Functionally, pore-forming protein that causes membrane permeabilization via a pyroptosis-like activity. Makes ring-like pores when released. The polypeptide is Gasdermin bGSDM (Gillisia limnaea (strain DSM 15749 / LMG 21470 / R-8282)).